A 465-amino-acid polypeptide reads, in one-letter code: A-type ATP synthase subunit B (465 aa).

Belongs to the ATPase alpha/beta chains family. The A-type ATPase is composed of subunits A(3), B(3), C, D, E(1 or 2), F, H(2), I and proteolipid K(x).

It localises to the cell membrane. In terms of biological role, component of the A-type ATP synthase that produces ATP from ADP in the presence of a proton gradient across the membrane. The B chain is a regulatory subunit. This is A-type ATP synthase subunit B from Methanocaldococcus jannaschii (strain ATCC 43067 / DSM 2661 / JAL-1 / JCM 10045 / NBRC 100440) (Methanococcus jannaschii).